The following is a 27-amino-acid chain: Snake venom serine protease Afaacytin alpha/beta/beta' chains (27 aa).

One can recognise a Peptidase S1 domain in the interval 1–27; that stretch reads VIGGAECNINEHRSLVLLYXSSSXFGE.

It belongs to the peptidase S1 family. Snake venom subfamily. In terms of assembly, heterodimer of an alpha and a beta chain. Subunit beta is constituted of two disulfide-linked polypeptidic chains, beta and beta'. Calcium appears to be required for structural cohesion of the molecule. Post-translationally, both chains alpha and beta are N-glycosylated. Expressed by the venom gland.

The protein localises to the secreted. Its activity is regulated as follows. Inhibited by diisopropylfluorophosphate (DFP), benzamidine, heparin and hirudin, but not by plasmatic thrombin inhibitors, antithrombin-III and ecotin. Snake venom serine protease that exhibits alpha-fibrinase and beta-fibrinogenase activities. It replaces missing factors VIII (F8) and IX (F9) in deficient plasmas by activating purified human factor X (F10) into factor Xa. It releases serotonin from platelets and induces platelet aggregation in human (but not in rabbit). Has caseinolytic, arginine-esterase and amidase activities. The protein is Snake venom serine protease Afaacytin alpha/beta/beta' chains of Cerastes cerastes (Horned desert viper).